Reading from the N-terminus, the 278-residue chain is Octanoyl-[GcvH]:protein N-octanoyltransferase (278 aa).

One can recognise a BPL/LPL catalytic domain in the interval 44–249 (SQSPPTLRAW…TLQQHGASLL (206 aa)). Catalysis depends on cysteine 148, which acts as the Acyl-thioester intermediate.

Belongs to the octanoyltransferase LipL family.

The enzyme catalyses N(6)-octanoyl-L-lysyl-[glycine-cleavage complex H protein] + L-lysyl-[lipoyl-carrier protein] = N(6)-octanoyl-L-lysyl-[lipoyl-carrier protein] + L-lysyl-[glycine-cleavage complex H protein]. The protein operates within protein modification; protein lipoylation via endogenous pathway; protein N(6)-(lipoyl)lysine from octanoyl-[acyl-carrier-protein]. Its function is as follows. Catalyzes the amidotransfer (transamidation) of the octanoyl moiety from octanoyl-GcvH to the lipoyl domain of the E2 subunit of lipoate-dependent enzymes. The chain is Octanoyl-[GcvH]:protein N-octanoyltransferase from Halalkalibacterium halodurans (strain ATCC BAA-125 / DSM 18197 / FERM 7344 / JCM 9153 / C-125) (Bacillus halodurans).